The chain runs to 471 residues: Cysteine--tRNA ligase (471 aa).

Cysteine 29 is a Zn(2+) binding site. The short motif at 31 to 41 (PTVYDYFHIGN) is the 'HIGH' region element. Residues cysteine 212, histidine 237, and glutamate 241 each coordinate Zn(2+). The 'KMSKS' region motif lies at 269–273 (KMSKS). Lysine 272 is a binding site for ATP.

Belongs to the class-I aminoacyl-tRNA synthetase family. As to quaternary structure, monomer. Requires Zn(2+) as cofactor.

It localises to the cytoplasm. The enzyme catalyses tRNA(Cys) + L-cysteine + ATP = L-cysteinyl-tRNA(Cys) + AMP + diphosphate. The polypeptide is Cysteine--tRNA ligase (Symbiobacterium thermophilum (strain DSM 24528 / JCM 14929 / IAM 14863 / T)).